Here is a 515-residue protein sequence, read N- to C-terminus: Envelope glycoprotein (515 aa).

An N-terminal signal peptide occupies residues 1–33 (MPKERRSRRRPQPIIRWVSLTLTLLALCRPIQT). Residues 34–435 (WRCSLSLGNQ…LGLTAWVRET (402 aa)) lie on the Extracellular side of the membrane. Residues Asn129 and Asn203 are each glycosylated (N-linked (GlcNAc...) asparagine; by host). The short motif at 212 to 215 (CAIC) is the CXXC element. 3 disulfide bridges follow: Cys212/Cys215, Cys212/Cys392, and Cys384/Cys391. N-linked (GlcNAc...) asparagine; by host glycans are attached at residues Asn230, Asn251, Asn256, Asn271, and Asn287. Residues 304–324 (VAALTLGLALSVGLTGINVAV) are fusion peptide. Coiled-coil stretches lie at residues 330-376 (QRLT…WLYI) and 388-420 (NEPCCFLRIQNDSIILRGDLQPLSQRVSTDWQW). Residue Asn351 is glycosylated (N-linked (GlcNAc...) asparagine; by host). Residues 365–381 (AQNRRGLDWLYIRLGFQ) form an immunosuppression region. The CX6CC signature appears at 384–392 (CPTINEPCC). Asn398 carries N-linked (GlcNAc...) asparagine; by host glycosylation. A helical transmembrane segment spans residues 436 to 456 (IHSVLSLFLLALFLLFLAPCL). Residue Cys455 is the site of S-palmitoyl cysteine; by host attachment. The Cytoplasmic segment spans residues 457-515 (IKCLTSRLLKLLRQAPHFPEISLTPKPDSDYQALLPSAPEIYSHLSPVKPDYINLRPCP).

In terms of assembly, the mature envelope protein (Env) consists of a trimer of SU-TM heterodimers attached by a labile interchain disulfide bond. In terms of processing, specific enzymatic cleavages in vivo yield mature proteins. Envelope glycoproteins are synthesized as an inactive precursor that is N-glycosylated and processed likely by host cell furin or by a furin-like protease in the Golgi to yield the mature SU and TM proteins. The cleavage site between SU and TM requires the minimal sequence [KR]-X-[KR]-R. The CXXC motif is highly conserved across a broad range of retroviral envelope proteins. It is thought to participate in the formation of a labile disulfide bond possibly with the CX6CC motif present in the transmembrane protein. Isomerization of the intersubunit disulfide bond to an SU intrachain disulfide bond is thought to occur upon receptor recognition in order to allow membrane fusion. Post-translationally, the transmembrane protein is palmitoylated.

It is found in the virion membrane. The protein resides in the host cell membrane. Functionally, the surface protein (SU) attaches the virus to the host cell by binding to its receptor. This interaction triggers the refolding of the transmembrane protein (TM) and is thought to activate its fusogenic potential by unmasking its fusion peptide. Fusion occurs at the host cell plasma membrane. In terms of biological role, the transmembrane protein (TM) acts as a class I viral fusion protein. Under the current model, the protein has at least 3 conformational states: pre-fusion native state, pre-hairpin intermediate state, and post-fusion hairpin state. During viral and target cell membrane fusion, the coiled coil regions (heptad repeats) assume a trimer-of-hairpins structure, positioning the fusion peptide in close proximity to the C-terminal region of the ectodomain. The formation of this structure appears to drive apposition and subsequent fusion of viral and target cell membranes. Membranes fusion leads to delivery of the nucleocapsid into the cytoplasm. The polypeptide is Envelope glycoprotein (env) (Bos taurus (Bovine)).